The sequence spans 181 residues: Adenylate kinase (181 aa).

10–15 is an ATP binding site; sequence GAGKGT. The tract at residues 30-59 is NMP; it reads STGDLFRANISQGTELGKQAQEYMDAGKLV. AMP-binding positions include T31, R36, 57–59, 85–88, and Q92; these read KLV and GFPR. An LID region spans residues 126–132; sequence SRGRNDD. Residue R127 coordinates ATP. R129 and R140 together coordinate AMP. G166 contributes to the ATP binding site.

Belongs to the adenylate kinase family. In terms of assembly, monomer.

It is found in the cytoplasm. It carries out the reaction AMP + ATP = 2 ADP. Its pathway is purine metabolism; AMP biosynthesis via salvage pathway; AMP from ADP: step 1/1. Functionally, catalyzes the reversible transfer of the terminal phosphate group between ATP and AMP. Plays an important role in cellular energy homeostasis and in adenine nucleotide metabolism. The polypeptide is Adenylate kinase (Corynebacterium urealyticum (strain ATCC 43042 / DSM 7109)).